The following is a 130-amino-acid chain: Ribonuclease P protein component 2 (130 aa).

The protein belongs to the eukaryotic/archaeal RNase P protein component 2 family. As to quaternary structure, consists of a catalytic RNA component and at least 4-5 protein subunits.

The protein localises to the cytoplasm. The enzyme catalyses Endonucleolytic cleavage of RNA, removing 5'-extranucleotides from tRNA precursor.. Functionally, part of ribonuclease P, a protein complex that generates mature tRNA molecules by cleaving their 5'-ends. The sequence is that of Ribonuclease P protein component 2 from Methanococcus maripaludis (strain C7 / ATCC BAA-1331).